We begin with the raw amino-acid sequence, 840 residues long: Lon protease homolog 2, peroxisomal (840 aa).

A Lon N-terminal domain is found at 13–222 (LPLLCTHDGV…KALPLLTRQI (210 aa)). Position 375-382 (375-382 (GPPGVGKT)) interacts with ATP. The disordered stretch occupies residues 583–606 (QKVSRSEAPTEQHAEQNTDSKVED). The segment covering 584 to 606 (KVSRSEAPTEQHAEQNTDSKVED) has biased composition (basic and acidic residues). The Lon proteolytic domain occupies 641-825 (LTLPGVAIGL…DEVLNAAFDG (185 aa)). Active-site residues include serine 731 and lysine 774. Positions 838 to 840 (SKL) match the Microbody targeting signal motif.

Belongs to the peptidase S16 family.

The protein resides in the peroxisome matrix. It catalyses the reaction Hydrolysis of proteins in presence of ATP.. In terms of biological role, ATP-dependent serine protease that mediates the selective degradation of misfolded and unassembled polypeptides in the peroxisomal matrix. Necessary for type 2 peroxisome targeting signal (PTS2)-containing protein processing and facilitates peroxisome matrix protein import. The polypeptide is Lon protease homolog 2, peroxisomal (lonp2) (Danio rerio (Zebrafish)).